Here is a 1122-residue protein sequence, read N- to C-terminus: Breast carcinoma-amplified sequence 3 homolog (1122 aa).

The segment at 1–41 (MSADSPRRHPSGVVGSGIGLGSGSGTGLGSGSTGGSKSGAA) is disordered. Residues 14–37 (VGSGIGLGSGSGTGLGSGSTGGSK) are compositionally biased toward gly residues. Ser55 carries the phosphoserine modification. 4 stretches are compositionally biased toward low complexity: residues 357 to 377 (GTTAGSGASSKSSSFDSASGG), 626 to 641 (GSNSQRQRQRLSSLSD), 966 to 987 (TKDNASPNPNTNTNPNAIPSSN), and 1036 to 1051 (LSLEGPPSQSSPPLSL). Disordered stretches follow at residues 357 to 382 (GTTAGSGASSKSSSFDSASGGPDAKQ), 620 to 644 (GVGVGVGSNSQRQRQRLSSLSDDSG), 966 to 990 (TKDNASPNPNTNTNPNAIPSSNKVQ), 1033 to 1054 (NSRLSLEGPPSQSSPPLSLTNG), and 1071 to 1122 (GVAQ…RRNL). Ser638 is subject to Phosphoserine. Residues 1087–1112 (VDDDDEEEEEEEEELDEEAEPDDDER) show a composition bias toward acidic residues. The segment covering 1113 to 1122 (EDRPLGRRNL) has biased composition (basic and acidic residues).

The protein belongs to the BCAS3 family. In terms of tissue distribution, expressed in all postembryonic pericardial cells, but not in cardioblasts. Also expressed in Garland cells in third instar larvae (at protein level).

It is found in the cytoplasm. Regulates macropinocytosis in pericardial cells. The chain is Breast carcinoma-amplified sequence 3 homolog (rudhira) from Drosophila melanogaster (Fruit fly).